Reading from the N-terminus, the 776-residue chain is Semaphorin-4F (776 aa).

Positions 1–39 (MLARAERPRPGPRPPPVFPFPPPLSLLLLLAILSAPVCG) are cleaved as a signal peptide. Over 40–665 (RVPRSVPRTS…GPSNRAHTVV (626 aa)) the chain is Extracellular. The Sema domain occupies 47 to 515 (RTSLPISEAD…SHTEVTQVNT (469 aa)). The N-linked (GlcNAc...) asparagine glycan is linked to N69. The cysteines at positions 117 and 127 are disulfide-linked. Residue N138 is glycosylated (N-linked (GlcNAc...) asparagine). 3 disulfide bridges follow: C145/C154, C278/C389, and C302/C348. A glycan (N-linked (GlcNAc...) asparagine) is linked at N514. The region spanning 517-568 (NCGRLQSCSECILAQDPVCAWSFRLDACVAHAGEHRGMVQDIESADVSSLCP) is the PSI domain. 3 disulfides stabilise this stretch: C518–C535, C527–C544, and C592–C633. One can recognise an Ig-like C2-type domain in the interval 585–640 (VGHVVLPCSPSSAWASCVWHQPSGVTALTPRRDGLEVVVTPGAMGAYACECQEGGA). A helical membrane pass occupies residues 666–686 (GAGLVGFLLGVLAASLTLLLI). The Cytoplasmic portion of the chain corresponds to 687-776 (GRRQQRRRQR…PLATCDETSI (90 aa)). The segment at 702–741 (DKVGLDLGAPPSGTTSYSQDPPSPSPEDERLPLALGKRGS) is disordered. Phosphoserine occurs at positions 724 and 726. The PDZ-binding signature appears at 774-776 (TSI).

Belongs to the semaphorin family. Interacts (via PDZ-binding motif) with DLG4/SAP90 (via PDZ domain 2); this interaction may promote translocation of DLG4/SAP90 to the membrane. In terms of tissue distribution, expressed at low levels in the developing embryo. Expressed at high levels in the lung and adult central nervous system, including the dorsal root ganglia.

The protein resides in the cell membrane. The protein localises to the postsynaptic density. It localises to the perikaryon. Its subcellular location is the cell projection. It is found in the dendrite. Functionally, probable cell surface receptor that regulates oligodendroglial precursor cell migration. Might also regulate differentiation of oligodendroglial precursor cells. Has growth cone collapse activity against retinal ganglion-cell axons. This chain is Semaphorin-4F (Sema4f), found in Rattus norvegicus (Rat).